Consider the following 299-residue polypeptide: Putative S-adenosyl-L-methionine-dependent methyltransferase MAB_0027c (299 aa).

Residues Asp-126 and 155–156 (DL) each bind S-adenosyl-L-methionine.

It belongs to the UPF0677 family.

Exhibits S-adenosyl-L-methionine-dependent methyltransferase activity. This is Putative S-adenosyl-L-methionine-dependent methyltransferase MAB_0027c from Mycobacteroides abscessus (strain ATCC 19977 / DSM 44196 / CCUG 20993 / CIP 104536 / JCM 13569 / NCTC 13031 / TMC 1543 / L948) (Mycobacterium abscessus).